Consider the following 362-residue polypeptide: Atypical chemokine receptor 3 (362 aa).

The Extracellular portion of the chain corresponds to 1 to 40 (MDLHLFDYSEPGNFSDISWPCNSSDCIVVDTVMCPNMPNK). N-linked (GlcNAc...) asparagine glycosylation is found at asparagine 13, asparagine 22, and asparagine 39. A helical transmembrane segment spans residues 41–61 (SVLLYTLSFIYIFIFVIGMIA). Topologically, residues 62–81 (NSVVVWVNIQAKTTGYDTHC) are cytoplasmic. The chain crosses the membrane as a helical span at residues 82-102 (YILNLAIADLWVVLTIPVWVV). Over 103 to 118 (SLVQHNQWPMGELTCK) the chain is Extracellular. Cysteine 117 and cysteine 196 are joined by a disulfide. A helical transmembrane segment spans residues 119-139 (VTHLIFSINLFGSIFFLTCMS). The Cytoplasmic segment spans residues 140 to 162 (VDRYLSITYFTNTPSSRKKMVRR). The helical transmembrane segment at 163 to 183 (VVCILVWLLAFCVSLPDTYYL) threads the bilayer. Residues 184–213 (KTVTSASNNETYCRSFYPEHSIKEWLIGME) are Extracellular-facing. A helical membrane pass occupies residues 214 to 234 (LVSVVLGFAVPFSIIAVFYFL). Residues 235–252 (LARAISASSDQEKHSSRK) lie on the Cytoplasmic side of the membrane. Residues 253–273 (IIFSYVVVFLVCWLPYHVAVL) traverse the membrane as a helical segment. At 274–296 (LDIFSILHYIPFTCRLEHALFTA) the chain is on the extracellular side. Residues 297-319 (LHVTQCLSLVHCCVNPVLYSFIN) form a helical membrane-spanning segment. Topologically, residues 320–362 (RNYRYELMKAFIFKYSAKTGLTKLIDASRVSETEYSALEQSTK) are cytoplasmic. Residues 324 to 362 (YELMKAFIFKYSAKTGLTKLIDASRVSETEYSALEQSTK) are C-terminal cytoplasmic tail. Residues serine 347, serine 350, and serine 355 each carry the phosphoserine modification.

Belongs to the G-protein coupled receptor 1 family. Atypical chemokine receptor subfamily. In terms of assembly, homodimer. Can form heterodimers with CXCR4; heterodimerization may regulate CXCR4 signaling activity. Interacts with ARRB1 and ARRB2. The Ser/Thr residues in the C-terminal cytoplasmic tail may be phosphorylated. In terms of processing, ubiquitinated at the Lys residues in its C-terminal cytoplasmic tail and is essential for correct trafficking from and to the cell membrane. Deubiquitinated by CXCL12-stimulation in a reversible manner. In terms of tissue distribution, expressed in monocytes, basophils, B-cells, umbilical vein endothelial cells (HUVEC) and B-lymphoblastoid cells. Lower expression detected in CD4+ T-lymphocytes and natural killer cells. In the brain, detected in endothelial cells and capillaries, and in mature neurons of the frontal cortex and hippocampus. Expressed in tubular formation in the kidney. Highly expressed in astroglial tumor endothelial, microglial and glioma cells. Expressed at low levels in normal CD34+ progenitor cells, but at very high levels in several myeloid malignant cell lines. Expressed in breast carcinomas but not in normal breast tissue (at protein level).

The protein localises to the cell membrane. The protein resides in the early endosome. It is found in the recycling endosome. Atypical chemokine receptor that controls chemokine levels and localization via high-affinity chemokine binding that is uncoupled from classic ligand-driven signal transduction cascades, resulting instead in chemokine sequestration, degradation, or transcytosis. Also known as interceptor (internalizing receptor) or chemokine-scavenging receptor or chemokine decoy receptor. Acts as a receptor for chemokines CXCL11 and CXCL12/SDF1. Chemokine binding does not activate G-protein-mediated signal transduction but instead induces beta-arrestin recruitment, leading to ligand internalization and activation of MAPK signaling pathway. Required for regulation of CXCR4 protein levels in migrating interneurons, thereby adapting their chemokine responsiveness. In glioma cells, transduces signals via MEK/ERK pathway, mediating resistance to apoptosis. Promotes cell growth and survival. Not involved in cell migration, adhesion or proliferation of normal hematopoietic progenitors but activated by CXCL11 in malignant hemapoietic cells, leading to phosphorylation of ERK1/2 (MAPK3/MAPK1) and enhanced cell adhesion and migration. Plays a regulatory role in CXCR4-mediated activation of cell surface integrins by CXCL12. Required for heart valve development. Regulates axon guidance in the oculomotor system through the regulation of CXCL12 levels. Its function is as follows. (Microbial infection) Acts as a coreceptor with CXCR4 for a restricted number of HIV isolates. The polypeptide is Atypical chemokine receptor 3 (Homo sapiens (Human)).